The chain runs to 437 residues: Adenosylhomocysteinase (437 aa).

Substrate contacts are provided by threonine 54, aspartate 125, and glutamate 170. Threonine 171–threonine 173 is a binding site for NAD(+). Substrate contacts are provided by lysine 200 and aspartate 204. NAD(+) contacts are provided by residues asparagine 205, glycine 234–glycine 239, glutamate 258, asparagine 293, alanine 314–histidine 316, and asparagine 361.

The protein belongs to the adenosylhomocysteinase family. NAD(+) serves as cofactor.

The protein resides in the cytoplasm. The enzyme catalyses S-adenosyl-L-homocysteine + H2O = L-homocysteine + adenosine. It functions in the pathway amino-acid biosynthesis; L-homocysteine biosynthesis; L-homocysteine from S-adenosyl-L-homocysteine: step 1/1. Functionally, may play a key role in the regulation of the intracellular concentration of adenosylhomocysteine. The chain is Adenosylhomocysteinase from Pyrobaculum aerophilum (strain ATCC 51768 / DSM 7523 / JCM 9630 / CIP 104966 / NBRC 100827 / IM2).